Reading from the N-terminus, the 281-residue chain is tRNA N(3)-cytidine methyltransferase METTL8, mitochondrial (281 aa).

Residues 1 to 22 constitute a mitochondrion transit peptide; that stretch reads MNVIWRSCICRLRQGKVPHRCQ. A Glycyl lysine isopeptide (Lys-Gly) (interchain with G-Cter in SUMO) cross-link involves residue K80. The S-adenosyl-L-methionine site is built by W89 and Y93. The span at 139–151 shows a compositional bias: polar residues; the sequence is RTQGTETHCQESF. Residues 139–180 form a disordered region; the sequence is RTQGTETHCQESFVSPEPGSRGRSAPDPDLEEYSKGPGKTEP. 3 residues coordinate S-adenosyl-L-methionine: G194, D220, and D246.

It belongs to the methyltransferase superfamily. METL family. In terms of assembly, interacts with EP300. Absent in embryonic lung but is induced in a fibroblast cell line by stretch. In terms of tissue distribution, expressed in undifferentiated progenitor cells, while its expression is inhibited by stretch. As to expression, absent in undifferentiated embryonic lung mesenchymal cells, but expression is induced by stretch. Expressed in mature adipose tissue.

It is found in the mitochondrion. The protein resides in the cytoplasm. Its subcellular location is the nucleus. The catalysed reaction is cytidine(32) in tRNA(Ser) + S-adenosyl-L-methionine = N(3)-methylcytidine(32) in tRNA(Ser) + S-adenosyl-L-homocysteine + H(+). The enzyme catalyses cytidine(32) in tRNA(Thr) + S-adenosyl-L-methionine = N(3)-methylcytidine(32) in tRNA(Thr) + S-adenosyl-L-homocysteine + H(+). It catalyses the reaction a cytidine in mRNA + S-adenosyl-L-methionine = an N(3)-methylcytidine in mRNA + S-adenosyl-L-homocysteine + H(+). Its function is as follows. Mitochondrial S-adenosyl-L-methionine-dependent methyltransferase that mediates N(3)-methylcytidine modification of residue 32 of the tRNA anticodon loop of mitochondrial tRNA(Ser)(UCN) and tRNA(Thr). N(3)-methylcytidine methylation modification regulates mitochondrial translation efficiency and is required for activity of the respiratory chain. N(3)-methylcytidine methylation of mitochondrial tRNA(Ser)(UCN) requires the formation of N(6)-dimethylallyladenosine(37) (i6A37) by TRIT1 as prerequisite. May also mediate N(3)-methylcytidine modification of mRNAs. The existence of N(3)-methylcytidine modification on mRNAs is however unclear, and additional evidences are required to confirm the role of the N(3)-methylcytidine-specific mRNA methyltransferase activity of METTL8 in vivo. Overexpression in lung progenitor cells stimulates smooth muscle-specific gene expression and suppresses adipogenic gene expression. In terms of biological role, stimulates adipogenesis. This chain is tRNA N(3)-cytidine methyltransferase METTL8, mitochondrial, found in Mus musculus (Mouse).